Consider the following 215-residue polypeptide: 3-isopropylmalate dehydratase small subunit (215 aa).

Belongs to the LeuD family. LeuD type 1 subfamily. In terms of assembly, heterodimer of LeuC and LeuD.

The catalysed reaction is (2R,3S)-3-isopropylmalate = (2S)-2-isopropylmalate. It participates in amino-acid biosynthesis; L-leucine biosynthesis; L-leucine from 3-methyl-2-oxobutanoate: step 2/4. In terms of biological role, catalyzes the isomerization between 2-isopropylmalate and 3-isopropylmalate, via the formation of 2-isopropylmaleate. This chain is 3-isopropylmalate dehydratase small subunit, found in Chromohalobacter salexigens (strain ATCC BAA-138 / DSM 3043 / CIP 106854 / NCIMB 13768 / 1H11).